The chain runs to 267 residues: Phosphate import ATP-binding protein PstB (267 aa).

Positions 21 to 262 constitute an ABC transporter domain; the sequence is VAARNLDFYY…PSKQQTEDYI (242 aa). Residue 53–60 participates in ATP binding; it reads GPSGCGKS.

The protein belongs to the ABC transporter superfamily. Phosphate importer (TC 3.A.1.7) family. The complex is composed of two ATP-binding proteins (PstB), two transmembrane proteins (PstC and PstA) and a solute-binding protein (PstS).

The protein localises to the cell inner membrane. The enzyme catalyses phosphate(out) + ATP + H2O = ADP + 2 phosphate(in) + H(+). Part of the ABC transporter complex PstSACB involved in phosphate import. Responsible for energy coupling to the transport system. The chain is Phosphate import ATP-binding protein PstB from Xanthomonas axonopodis pv. citri (strain 306).